A 291-amino-acid chain; its full sequence is Polyamine aminopropyltransferase (291 aa).

Positions 5 to 245 constitute a PABS domain; sequence PGPIVLMEPL…YAVNFVLGSL (241 aa). Residue glutamine 36 participates in S-methyl-5'-thioadenosine binding. 2 residues coordinate spermidine: histidine 67 and glutamate 91. Residues aspartate 111 and 143–144 contribute to the S-methyl-5'-thioadenosine site; that span reads DG. The Proton acceptor role is filled by aspartate 164.

This sequence belongs to the spermidine/spermine synthase family. As to quaternary structure, homodimer or homotetramer.

It is found in the cytoplasm. It catalyses the reaction norspermidine + S-adenosyl 3-(methylsulfanyl)propylamine = norspermine + S-methyl-5'-thioadenosine + H(+). It carries out the reaction S-adenosyl 3-(methylsulfanyl)propylamine + spermidine = thermospermine + S-methyl-5'-thioadenosine + H(+). Involved in the biosynthesis of polyamines which are thought to support the growth of thermophilic microorganisms under high-temperature conditions. It seems that long-chain and branched-chain of polyamines effectively stabilize DNA and RNA, respectively. Catalyzes the irreversible transfer of a propylamine group from the amino donor S-adenosylmethioninamine (decarboxy-AdoMet) to norspermidine and 1,3-diaminopropane to yield norspermine, and to spermidine to yield thermospermine. It can also synthesize thermospermine from putrescine (1,4-diaminobutane) and caldopentamine from norspermine with a very low activity. The biosynthesis of caldohexamine and caldoheptamine from caldopentamine has been also observed. This chain is Polyamine aminopropyltransferase, found in Pyrobaculum aerophilum (strain ATCC 51768 / DSM 7523 / JCM 9630 / CIP 104966 / NBRC 100827 / IM2).